The sequence spans 128 residues: Calcitonin gene-related peptide 1 (128 aa).

The signal sequence occupies residues 1–25 (MGFLKFSPFLVVSILLLYQACGLQA). Positions 26 to 80 (VPLRSTLESSPGMAATLSEEEARLLLAALVQNYMQMKVRELEQEQEAEGSSVTAQ) are excised as a propeptide. A disulfide bridge connects residues Cys-84 and Cys-89. Phe-119 is modified (phenylalanine amide). The propeptide occupies 125 to 128 (DLQA).

This sequence belongs to the calcitonin family.

The protein resides in the secreted. Its function is as follows. CGRP1/CALCA is a peptide hormone that induces vasodilation mediated by the CALCRL-RAMP1 receptor complex. Dilates a variety of vessels including the coronary, cerebral and systemic vasculature. Its abundance in the CNS also points toward a neurotransmitter or neuromodulator role. It also elevates platelet cAMP. CGRP1 can also bind and activate CALCR-RAMP1 (AMYR1) receptor complex. In Rattus norvegicus (Rat), this protein is Calcitonin gene-related peptide 1.